Consider the following 137-residue polypeptide: MNALRGWLAALGSVLLASAAQLGMRWGMSRLPLPEAWAGQTPERAALLAVALAVAAYAASLLCWLAALRHLPLGRAYSLLSASYALVYLLAASLPAFDETFSTSKTLGVGLVVLGVLTVNARRTAAAPAHHPSRKAP.

Topologically, residues 1–3 (MNA) are cytoplasmic. Residues 4–24 (LRGWLAALGSVLLASAAQLGM) form a helical membrane-spanning segment. Over 25–44 (RWGMSRLPLPEAWAGQTPER) the chain is Periplasmic. The chain crosses the membrane as a helical span at residues 45–65 (AALLAVALAVAAYAASLLCWL). The Cytoplasmic segment spans residues 66 to 76 (AALRHLPLGRA). Residues 77–97 (YSLLSASYALVYLLAASLPAF) form a helical membrane-spanning segment. Residues 98–100 (DET) lie on the Periplasmic side of the membrane. A helical transmembrane segment spans residues 101-121 (FSTSKTLGVGLVVLGVLTVNA). Topologically, residues 122–137 (RRTAAAPAHHPSRKAP) are cytoplasmic.

This sequence belongs to the ArnF family. Heterodimer of ArnE and ArnF.

Its subcellular location is the cell inner membrane. It participates in bacterial outer membrane biogenesis; lipopolysaccharide biosynthesis. In terms of biological role, translocates 4-amino-4-deoxy-L-arabinose-phosphoundecaprenol (alpha-L-Ara4N-phosphoundecaprenol) from the cytoplasmic to the periplasmic side of the inner membrane. The polypeptide is Probable 4-amino-4-deoxy-L-arabinose-phosphoundecaprenol flippase subunit ArnF (Pseudomonas aeruginosa (strain ATCC 15692 / DSM 22644 / CIP 104116 / JCM 14847 / LMG 12228 / 1C / PRS 101 / PAO1)).